Consider the following 300-residue polypeptide: 4-hydroxy-tetrahydrodipicolinate synthase (300 aa).

A pyruvate-binding site is contributed by Thr-49. The Proton donor/acceptor role is filled by Tyr-137. Lys-166 serves as the catalytic Schiff-base intermediate with substrate. Residue Ile-208 coordinates pyruvate.

It belongs to the DapA family. As to quaternary structure, homotetramer; dimer of dimers.

Its subcellular location is the cytoplasm. It catalyses the reaction L-aspartate 4-semialdehyde + pyruvate = (2S,4S)-4-hydroxy-2,3,4,5-tetrahydrodipicolinate + H2O + H(+). It functions in the pathway amino-acid biosynthesis; L-lysine biosynthesis via DAP pathway; (S)-tetrahydrodipicolinate from L-aspartate: step 3/4. Functionally, catalyzes the condensation of (S)-aspartate-beta-semialdehyde [(S)-ASA] and pyruvate to 4-hydroxy-tetrahydrodipicolinate (HTPA). The protein is 4-hydroxy-tetrahydrodipicolinate synthase of Methanopyrus kandleri (strain AV19 / DSM 6324 / JCM 9639 / NBRC 100938).